A 627-amino-acid chain; its full sequence is 1-deoxy-D-xylulose-5-phosphate synthase (627 aa).

Thiamine diphosphate-binding positions include His-72 and 113–115; that span reads GHS. Asp-144 is a Mg(2+) binding site. Residues 145-146, Asn-173, Tyr-283, and Glu-366 contribute to the thiamine diphosphate site; that span reads GA. Residue Asn-173 participates in Mg(2+) binding.

This sequence belongs to the transketolase family. DXPS subfamily. Homodimer. Requires Mg(2+) as cofactor. It depends on thiamine diphosphate as a cofactor.

The enzyme catalyses D-glyceraldehyde 3-phosphate + pyruvate + H(+) = 1-deoxy-D-xylulose 5-phosphate + CO2. The protein operates within metabolic intermediate biosynthesis; 1-deoxy-D-xylulose 5-phosphate biosynthesis; 1-deoxy-D-xylulose 5-phosphate from D-glyceraldehyde 3-phosphate and pyruvate: step 1/1. In terms of biological role, catalyzes the acyloin condensation reaction between C atoms 2 and 3 of pyruvate and glyceraldehyde 3-phosphate to yield 1-deoxy-D-xylulose-5-phosphate (DXP). The chain is 1-deoxy-D-xylulose-5-phosphate synthase from Macrococcus caseolyticus (strain JCSC5402) (Macrococcoides caseolyticum).